Here is an 82-residue protein sequence, read N- to C-terminus: uncharacterized protein (82 aa).

This is an uncharacterized protein from Escherichia coli (strain K12).